The following is a 200-amino-acid chain: GTP cyclohydrolase-2 (200 aa).

GTP is bound at residue 52–56 (RIHSE). The Zn(2+) site is built by C57, C68, and C70. GTP is bound by residues Q73, 94 to 96 (EGR), and T116. Catalysis depends on D128, which acts as the Proton acceptor. The active-site Nucleophile is R130. The GTP site is built by T151 and K156.

Belongs to the GTP cyclohydrolase II family. Requires Zn(2+) as cofactor.

It carries out the reaction GTP + 4 H2O = 2,5-diamino-6-hydroxy-4-(5-phosphoribosylamino)-pyrimidine + formate + 2 phosphate + 3 H(+). It functions in the pathway cofactor biosynthesis; riboflavin biosynthesis; 5-amino-6-(D-ribitylamino)uracil from GTP: step 1/4. Catalyzes the conversion of GTP to 2,5-diamino-6-ribosylamino-4(3H)-pyrimidinone 5'-phosphate (DARP), formate and pyrophosphate. The protein is GTP cyclohydrolase-2 of Psychromonas ingrahamii (strain DSM 17664 / CCUG 51855 / 37).